The sequence spans 101 residues: Ubiquitin-related modifier 1 homolog (101 aa).

A 1-thioglycine modification is found at Gly-101. Gly-101 participates in a covalent cross-link: Glycyl lysine isopeptide (Gly-Lys) (interchain with K-? in acceptor proteins).

This sequence belongs to the URM1 family. Interacts with cer. In terms of processing, C-terminal thiocarboxylation occurs in 2 steps, it is first acyl-adenylated (-COAMP) via the hesA/moeB/thiF part of the MOCS3 homolog, then thiocarboxylated (-COSH) via the rhodanese domain of the MOCS3 homolog.

Its subcellular location is the cytoplasm. The protein operates within tRNA modification; 5-methoxycarbonylmethyl-2-thiouridine-tRNA biosynthesis. In terms of biological role, acts as a sulfur carrier required for 2-thiolation of mcm(5)S(2)U at tRNA wobble positions of cytosolic tRNA(Lys), tRNA(Glu) and tRNA(Gln). Serves as sulfur donor in tRNA 2-thiolation reaction by being thiocarboxylated (-COSH) at its C-terminus by MOCS3. The sulfur is then transferred to tRNA to form 2-thiolation of mcm(5)S(2)U. Also acts as a ubiquitin-like protein (UBL) that is covalently conjugated via an isopeptide bond to lysine residues of target proteins such as Prx2/Jafrac1, Ciao1, Eip71CD and GILT1. The thiocarboxylated form serves as substrate for conjugation and oxidative stress specifically induces the formation of UBL-protein conjugates. The polypeptide is Ubiquitin-related modifier 1 homolog (Drosophila sechellia (Fruit fly)).